Consider the following 478-residue polypeptide: CDK5 and ABL1 enzyme substrate 2 (478 aa).

The segment at 1-121 (MAAAAAGGAP…GLGLDGQRQR (121 aa)) is disordered. Pro residues predominate over residues 11-24 (GPAPGPAGPPPPAA). Residues 25–35 (PTSAARAPPQA) are compositionally biased toward low complexity. The span at 36-46 (LRRRGDSRRRQ) shows a compositional bias: basic residues. A compositionally biased stretch (pro residues) spans 69–92 (EKPPPPPAEAREPPAPPPPEPPTG). Residues S130 and S208 each carry the phosphoserine modification. Positions 257–296 (SDSHGLLPTPRPSVPRTLPGSRHKPAPTKSAPASTELGSD) are disordered.

It belongs to the cyclin family. In terms of assembly, binds to CDK3, CDK5 and ABL1. The C-terminal cyclin-box-like region binds to CDK5.

Unknown. Probably involved in G1-S cell cycle transition. In Homo sapiens (Human), this protein is CDK5 and ABL1 enzyme substrate 2 (CABLES2).